A 950-amino-acid polypeptide reads, in one-letter code: Bifunctional glutamine synthetase adenylyltransferase/adenylyl-removing enzyme (950 aa).

The interval 1–440 (MLPLPSELQI…VFDHLIGDDA (440 aa)) is adenylyl removase. Positions 449-950 (HGLYKSLWQD…KWLVAAPSDV (502 aa)) are adenylyl transferase.

The protein belongs to the GlnE family. It depends on Mg(2+) as a cofactor.

It catalyses the reaction [glutamine synthetase]-O(4)-(5'-adenylyl)-L-tyrosine + phosphate = [glutamine synthetase]-L-tyrosine + ADP. The catalysed reaction is [glutamine synthetase]-L-tyrosine + ATP = [glutamine synthetase]-O(4)-(5'-adenylyl)-L-tyrosine + diphosphate. Functionally, involved in the regulation of glutamine synthetase GlnA, a key enzyme in the process to assimilate ammonia. When cellular nitrogen levels are high, the C-terminal adenylyl transferase (AT) inactivates GlnA by covalent transfer of an adenylyl group from ATP to specific tyrosine residue of GlnA, thus reducing its activity. Conversely, when nitrogen levels are low, the N-terminal adenylyl removase (AR) activates GlnA by removing the adenylyl group by phosphorolysis, increasing its activity. The regulatory region of GlnE binds the signal transduction protein PII (GlnB) which indicates the nitrogen status of the cell. The protein is Bifunctional glutamine synthetase adenylyltransferase/adenylyl-removing enzyme of Yersinia enterocolitica serotype O:8 / biotype 1B (strain NCTC 13174 / 8081).